A 1301-amino-acid chain; its full sequence is Zinc finger protein 532 (1301 aa).

Disordered stretches follow at residues 26-206 (PKAA…RETE), 223-266 (AEDK…SSSK), and 281-366 (KAAS…IKTI). The segment covering 32 to 52 (SGHDDHESHMKQNAHGEDDSH) has biased composition (basic and acidic residues). Positions 84 to 101 (PTGNGLHNGFLTASSLDS) are enriched in polar residues. Residues 102-111 (YSKDGAKSLK) show a composition bias toward basic and acidic residues. The span at 122–133 (KDSTFSQFSPIS) shows a compositional bias: polar residues. Residues Ser-130, Ser-133, and Ser-134 each carry the phosphoserine modification. Residues 136 to 151 (EEFDDDEKIEVDDPPD) show a composition bias toward acidic residues. The segment covering 158–170 (SFRSNVLTGSAPQ) has biased composition (polar residues). Lys-175 is modified (N6-acetyllysine). The span at 182-195 (ENSSKTGLSTSGNV) shows a compositional bias: polar residues. 2 stretches are compositionally biased toward basic and acidic residues: residues 196-206 (EKNKAVKRETE) and 223-250 (AEDK…EKND). A Phosphothreonine modification is found at Thr-205. A phosphoserine mark is found at Ser-252, Ser-307, and Ser-314. Basic and acidic residues predominate over residues 303–315 (EVNDSPRAADKSP). Residues 337-359 (SISSENSSKGSPSSPAGSTPAIP) show a composition bias toward low complexity. Residue Ser-434 is modified to Phosphoserine. Glycyl lysine isopeptide (Lys-Gly) (interchain with G-Cter in SUMO2) cross-links involve residues Lys-459 and Lys-516. The C2H2-type 1; degenerate zinc finger occupies 616–635 (YKCLECGDSFALEKSLTQHY). The segment at 754–779 (LKCLECNEVFQDETSLATHFQQAADT) adopts a C2H2-type 2; degenerate zinc-finger fold. 5 C2H2-type zinc fingers span residues 783-805 (KTCT…QRIH), 842-865 (FRCV…QGSH), 870-893 (YKCP…YTQH), 905-927 (YKCS…FDQH), and 936-959 (FKCP…KSMH). Residue Lys-980 forms a Glycyl lysine isopeptide (Lys-Gly) (interchain with G-Cter in SUMO2) linkage. A disordered region spans residues 983–1017 (TQNSANQNKEDTKSMNGKEKLEKKSPSPVKKSMET). Residues 990-1017 (NKEDTKSMNGKEKLEKKSPSPVKKSMET) show a composition bias toward basic and acidic residues. C2H2-type zinc fingers lie at residues 1025 to 1048 (WTCW…RKEH) and 1055 to 1078 (HPCR…RIKH). The segment at 1085 to 1111 (YACSHCPDSRRTFTKRLMLEKHVQLMH) adopts a C2H2-type 10; degenerate zinc-finger fold. A Phosphoserine modification is found at Ser-1140. Residues Lys-1144 and Lys-1167 each participate in a glycyl lysine isopeptide (Lys-Gly) (interchain with G-Cter in SUMO2) cross-link. A C2H2-type 11 zinc finger spans residues 1203–1226 (YQCRECGLCYTSHVSLSRHLFIVH). Positions 1230 to 1263 (EPQPVSKQNGAGEDNQQENKPSHEDESPDGAVSD) are disordered. The C2H2-type 12 zinc-finger motif lies at 1264–1286 (RKCKVCAKTFETEAALNTHMRTH).

It belongs to the krueppel C2H2-type zinc-finger protein family.

The protein localises to the nucleus. In terms of biological role, may be involved in transcriptional regulation. The polypeptide is Zinc finger protein 532 (ZNF532) (Homo sapiens (Human)).